We begin with the raw amino-acid sequence, 83 residues long: Cell division topological specificity factor (83 aa).

Belongs to the MinE family.

Its function is as follows. Prevents the cell division inhibition by proteins MinC and MinD at internal division sites while permitting inhibition at polar sites. This ensures cell division at the proper site by restricting the formation of a division septum at the midpoint of the long axis of the cell. This chain is Cell division topological specificity factor, found in Deinococcus deserti (strain DSM 17065 / CIP 109153 / LMG 22923 / VCD115).